Here is a 730-residue protein sequence, read N- to C-terminus: Matrix metalloproteinase-9 (730 aa).

Residues 1-19 (MSPWQPLLLALLAFGCSSA) form the signal peptide. Positions 20-107 (APYQRQPTFV…PRCGVPDVGR (88 aa)) are cleaved as a propeptide — activation peptide. Asn39 is a glycosylation site (N-linked (GlcNAc...) asparagine). The Cysteine switch signature appears at 98–105 (PRCGVPDV). Residue Cys100 participates in Zn(2+) binding. N-linked (GlcNAc...) asparagine glycans are attached at residues Asn120 and Asn127. The Ca(2+) site is built by Asp131 and Asp165. 2 residues coordinate Zn(2+): His175 and Asp177. Asp182, Gly183, Asp185, and Leu187 together coordinate Ca(2+). Position 190 (His190) interacts with Zn(2+). Ca(2+) contacts are provided by Gly197, Gln199, and Asp201. Residue His203 participates in Zn(2+) binding. Asp205, Asp206, and Glu208 together coordinate Ca(2+). Fibronectin type-II domains are found at residues 225 to 273 (SNGA…FCPS), 283 to 331 (GEGK…FCPT), and 342 to 390 (SAGE…FCPD). 6 cysteine pairs are disulfide-bonded: Cys230–Cys256, Cys244–Cys271, Cys288–Cys314, Cys302–Cys329, Cys347–Cys373, and Cys361–Cys388. Zn(2+) is bound at residue His401. The active site involves Glu402. Zn(2+)-binding residues include His405 and His411. Residues 442–529 (LYGRGSKPDP…SEASTESLSP (88 aa)) are disordered. Residues 463-477 (PTAPPTMCPTIPPTA) show a composition bias toward pro residues. Residues 478-489 (YPTVGPTVGPTG) show a composition bias toward low complexity. Positions 490–514 (APSPGPTSSPSPGPTGAPSPGPTAP) are enriched in pro residues. A disulfide bridge links Cys534 with Cys729. Hemopexin repeat units lie at residues 536 to 581 (VDVF…WPAL), 582 to 626 (PATL…GLGP), 628 to 675 (VTHV…FSGV), and 676 to 729 (PWNS…LLQC).

It belongs to the peptidase M10A family. As to quaternary structure, exists as monomer or homodimer; disulfide-linked. Also exists as heterodimer with LCN2. Macrophages and transformed cell lines produce only the monomeric form. Interacts with ECM1. The cofactor is Zn(2+). Requires Ca(2+) as cofactor. Post-translationally, N- and O-glycosylated.

The protein resides in the secreted. Its subcellular location is the extracellular space. The protein localises to the extracellular matrix. It carries out the reaction Cleavage of gelatin types I and V and collagen types IV and V.. With respect to regulation, inhibited by histatin-3 1/24 (histatin-5). Inhibited by ECM1. Its function is as follows. Matrix metalloproteinase that plays an essential role in local proteolysis of the extracellular matrix and in leukocyte migration. Could play a role in bone osteoclastic resorption. Cleaves KiSS1 at a Gly-|-Leu bond. Cleaves NINJ1 to generate the Secreted ninjurin-1 form. Cleaves type IV and type V collagen into large C-terminal three quarter fragments and shorter N-terminal one quarter fragments. Degrades fibronectin but not laminin or Pz-peptide. The sequence is that of Matrix metalloproteinase-9 (Mmp9) from Mus musculus (Mouse).